The following is a 260-amino-acid chain: Sulfoquinovose 1-dehydrogenase (260 aa).

Tyr160 (proton acceptor) is an active-site residue.

The protein belongs to the short-chain dehydrogenases/reductases (SDR) family.

The catalysed reaction is 6-sulfo-D-quinovose + NAD(+) = 6-deoxy-6-sulfo-D-glucono-1,5-lactone + NADH + H(+). Functionally, catalyzes the oxidation of sulfoquinovose to 6-deoxy-6-sulfo-D-glucono-1,5-lactone, with a strong preference for NAD(+) as the electron acceptor. Is involved in a degradation pathway of sulfoquinovose (SQ) that allows P.putida SQ1 to use SQ as the sole carbon and energy source for growth. This chain is Sulfoquinovose 1-dehydrogenase, found in Pseudomonas putida (Arthrobacter siderocapsulatus).